Here is a 318-residue protein sequence, read N- to C-terminus: Probable pyridoxal 5'-phosphate synthase subunit PDX1.1 (318 aa).

Residue Asp-49 coordinates D-ribose 5-phosphate. The Schiff-base intermediate with D-ribose 5-phosphate role is filled by Lys-106. Gly-178 is a D-ribose 5-phosphate binding site. A D-glyceraldehyde 3-phosphate-binding site is contributed by Arg-190. Residues Gly-239 and 260–261 (GS) each bind D-ribose 5-phosphate.

The protein belongs to the PdxS/SNZ family.

The enzyme catalyses aldehydo-D-ribose 5-phosphate + D-glyceraldehyde 3-phosphate + L-glutamine = pyridoxal 5'-phosphate + L-glutamate + phosphate + 3 H2O + H(+). It participates in cofactor biosynthesis; pyridoxal 5'-phosphate biosynthesis. Functionally, catalyzes the formation of pyridoxal 5'-phosphate from ribose 5-phosphate (RBP), glyceraldehyde 3-phosphate (G3P) and ammonia. The ammonia is provided by PDX2. Can also use ribulose 5-phosphate and dihydroxyacetone phosphate as substrates, resulting from enzyme-catalyzed isomerization of RBP and G3P, respectively. Also plays an indirect role in resistance to singlet oxygen-generating photosensitizers. The protein is Probable pyridoxal 5'-phosphate synthase subunit PDX1.1 (PDX11) of Oryza sativa subsp. japonica (Rice).